Reading from the N-terminus, the 486-residue chain is Glutamate--tRNA ligase (486 aa).

The short motif at 11–21 is the 'HIGH' region element; it reads PSPTGLLHIGN. Positions 255-259 match the 'KMSKS' region motif; sequence KLSKR. Lys258 is a binding site for ATP.

It belongs to the class-I aminoacyl-tRNA synthetase family. Glutamate--tRNA ligase type 1 subfamily. In terms of assembly, monomer.

Its subcellular location is the cytoplasm. The catalysed reaction is tRNA(Glu) + L-glutamate + ATP = L-glutamyl-tRNA(Glu) + AMP + diphosphate. Functionally, catalyzes the attachment of glutamate to tRNA(Glu) in a two-step reaction: glutamate is first activated by ATP to form Glu-AMP and then transferred to the acceptor end of tRNA(Glu). This is Glutamate--tRNA ligase from Streptococcus pneumoniae (strain ATCC BAA-255 / R6).